An 87-amino-acid chain; its full sequence is Antitoxin RelB1 (87 aa).

Antitoxin component of a type II toxin-antitoxin (TA) system. Neutralizes the effect of cognate toxin RelE1, but no other RelE or ParE toxin. The chain is Antitoxin RelB1 (relB1) from Caulobacter vibrioides (strain ATCC 19089 / CIP 103742 / CB 15) (Caulobacter crescentus).